Consider the following 611-residue polypeptide: Glutamine--fructose-6-phosphate aminotransferase [isomerizing] (611 aa).

Residue cysteine 2 is the Nucleophile; for GATase activity of the active site. The Glutamine amidotransferase type-2 domain occupies 2–219 (CGIVGAIAER…EGDIAEIRRD (218 aa)). 2 consecutive SIS domains span residues 287–427 (AAEL…VQKR) and 460–601 (VSEL…VDQP). Residue lysine 606 is the For Fru-6P isomerization activity of the active site.

As to quaternary structure, homodimer.

The protein resides in the cytoplasm. It catalyses the reaction D-fructose 6-phosphate + L-glutamine = D-glucosamine 6-phosphate + L-glutamate. Catalyzes the first step in hexosamine metabolism, converting fructose-6P into glucosamine-6P using glutamine as a nitrogen source. In Pseudomonas aeruginosa (strain ATCC 15692 / DSM 22644 / CIP 104116 / JCM 14847 / LMG 12228 / 1C / PRS 101 / PAO1), this protein is Glutamine--fructose-6-phosphate aminotransferase [isomerizing].